Reading from the N-terminus, the 428-residue chain is 3-phosphoshikimate 1-carboxyvinyltransferase (428 aa).

The 3-phosphoshikimate site is built by Lys-23, Ser-24, and Arg-28. Residue Lys-23 participates in phosphoenolpyruvate binding. Phosphoenolpyruvate is bound by residues Gly-97 and Arg-125. 3-phosphoshikimate-binding residues include Ser-170, Ser-171, Gln-172, Ser-198, Asp-314, Asn-337, and Lys-341. Gln-172 contacts phosphoenolpyruvate. The active-site Proton acceptor is the Asp-314. Phosphoenolpyruvate is bound by residues Arg-345, Arg-387, and Lys-412.

It belongs to the EPSP synthase family. In terms of assembly, monomer.

It localises to the cytoplasm. The catalysed reaction is 3-phosphoshikimate + phosphoenolpyruvate = 5-O-(1-carboxyvinyl)-3-phosphoshikimate + phosphate. It participates in metabolic intermediate biosynthesis; chorismate biosynthesis; chorismate from D-erythrose 4-phosphate and phosphoenolpyruvate: step 6/7. In terms of biological role, catalyzes the transfer of the enolpyruvyl moiety of phosphoenolpyruvate (PEP) to the 5-hydroxyl of shikimate-3-phosphate (S3P) to produce enolpyruvyl shikimate-3-phosphate and inorganic phosphate. This Edwardsiella ictaluri (strain 93-146) protein is 3-phosphoshikimate 1-carboxyvinyltransferase.